We begin with the raw amino-acid sequence, 360 residues long: Mannose-1-phosphate guanylyltransferase catalytic subunit beta (360 aa).

A substrate-binding domain region spans residues 2-222; that stretch reads KALILVGGYG…QGFWMDIGQP (221 aa). Position 110 (aspartate 110) interacts with GDP-alpha-D-mannose. Aspartate 110 is a Mg(2+) binding site. The active site involves lysine 162. Residue aspartate 218 participates in GDP-alpha-D-mannose binding. Mg(2+) is bound at residue aspartate 218. The segment at 245 to 360 is hexapeptide repeat domain; sequence RAGPGFLGNV…DSVPEPRIIM (116 aa).

The protein belongs to the transferase hexapeptide repeat family. As to quaternary structure, component of the GMPPA-GMPPB mannose-1-phosphate guanylyltransferase complex composed of 4 gmppa subunits and 8 gmppb subunits; the complex is organized into three layers, a central layer made up of 2 gmppa dimers sandwiched between two layers each made up of 2 gmppb dimers. Catalytic activity of gmppb is reduced when part of the complex and binding of GDP-alpha-D-Mannose by gmppa induces allosteric feedback inhibition of gmppb. The cofactor is Mg(2+).

It catalyses the reaction alpha-D-mannose 1-phosphate + GTP + H(+) = GDP-alpha-D-mannose + diphosphate. It functions in the pathway nucleotide-sugar biosynthesis; GDP-alpha-D-mannose biosynthesis; GDP-alpha-D-mannose from alpha-D-mannose 1-phosphate (GTP route): step 1/1. Enzyme activity is reduced by incorporation into the GMPPA-GMPPB mannose-1-phosphate guanylyltransferase complex. Allosterically inhibited, when part of the GMPPA-GMPPB complex, by GDP-alpha-D-mannose binding to GMPPA. Functionally, catalytic subunit of the GMPPA-GMPPB mannose-1-phosphate guanylyltransferase complex. Catalyzes the formation of GDP-mannose, an essential precursor of glycan moieties of glycoproteins and glycolipids. Can catalyze the reverse reaction in vitro. Together with GMPPA regulates GDP-alpha-D-mannose levels. The protein is Mannose-1-phosphate guanylyltransferase catalytic subunit beta (gmppb) of Danio rerio (Zebrafish).